A 78-amino-acid chain; its full sequence is MHEELLTLCDCAFEARLIELETRVSFQEQALTEISEALAETRLIGARNAELMRHLLEELGKVRNTLYEHPIDEPPPHY.

Belongs to the SlyX family.

The sequence is that of Protein SlyX homolog from Xylella fastidiosa (strain 9a5c).